Reading from the N-terminus, the 370-residue chain is 3-isopropylmalate dehydrogenase (370 aa).

77–90 provides a ligand contact to NAD(+); the sequence is GPKWDSVPYEVRPE. Arginine 97, arginine 107, arginine 135, and aspartate 226 together coordinate substrate. 3 residues coordinate Mg(2+): aspartate 226, aspartate 250, and aspartate 254. 290–302 contributes to the NAD(+) binding site; sequence GSAPDIAGKGIAN.

Belongs to the isocitrate and isopropylmalate dehydrogenases family. LeuB type 1 subfamily. As to quaternary structure, homodimer. It depends on Mg(2+) as a cofactor. The cofactor is Mn(2+).

The protein localises to the cytoplasm. It catalyses the reaction (2R,3S)-3-isopropylmalate + NAD(+) = 4-methyl-2-oxopentanoate + CO2 + NADH. Its pathway is amino-acid biosynthesis; L-leucine biosynthesis; L-leucine from 3-methyl-2-oxobutanoate: step 3/4. Its function is as follows. Catalyzes the oxidation of 3-carboxy-2-hydroxy-4-methylpentanoate (3-isopropylmalate) to 3-carboxy-4-methyl-2-oxopentanoate. The product decarboxylates to 4-methyl-2 oxopentanoate. The protein is 3-isopropylmalate dehydrogenase of Brucella abortus (strain 2308).